Consider the following 704-residue polypeptide: DNA ligase (704 aa).

Residues 43-47, 92-93, and Glu-124 each bind NAD(+); these read DADYD and SL. The N6-AMP-lysine intermediate role is filled by Lys-126. NAD(+) contacts are provided by Arg-147, Glu-182, Lys-298, and Lys-322. Positions 427, 430, 445, and 451 each coordinate Zn(2+). One can recognise a BRCT domain in the interval 625–704; the sequence is PVASPVAGKI…DGWLRLIGDA (80 aa).

Belongs to the NAD-dependent DNA ligase family. LigA subfamily. It depends on Mg(2+) as a cofactor. The cofactor is Mn(2+).

The enzyme catalyses NAD(+) + (deoxyribonucleotide)n-3'-hydroxyl + 5'-phospho-(deoxyribonucleotide)m = (deoxyribonucleotide)n+m + AMP + beta-nicotinamide D-nucleotide.. Its function is as follows. DNA ligase that catalyzes the formation of phosphodiester linkages between 5'-phosphoryl and 3'-hydroxyl groups in double-stranded DNA using NAD as a coenzyme and as the energy source for the reaction. It is essential for DNA replication and repair of damaged DNA. This Cereibacter sphaeroides (strain ATCC 17023 / DSM 158 / JCM 6121 / CCUG 31486 / LMG 2827 / NBRC 12203 / NCIMB 8253 / ATH 2.4.1.) (Rhodobacter sphaeroides) protein is DNA ligase.